Consider the following 487-residue polypeptide: Sensor protein CseC (487 aa).

Positions Met1–Ala11 are enriched in low complexity. The disordered stretch occupies residues Met1–Arg41. A run of 2 helical transmembrane segments spans residues Ile63 to His83 and Ala185 to Gly205. One can recognise an HAMP domain in the interval Gly206–Glu262. Residues Asp270–Ala472 enclose the Histidine kinase domain. At His273 the chain carries Phosphohistidine; by autocatalysis.

Its subcellular location is the cell membrane. It catalyses the reaction ATP + protein L-histidine = ADP + protein N-phospho-L-histidine.. This is Sensor protein CseC (cseC) from Streptomyces avermitilis (strain ATCC 31267 / DSM 46492 / JCM 5070 / NBRC 14893 / NCIMB 12804 / NRRL 8165 / MA-4680).